We begin with the raw amino-acid sequence, 120 residues long: MNDSSLSLKKWHALSALSNTMLSLAQSGKWDELIEQEVAYVSLVEKISITPFPPGSKHIQDQAMVMLNNVLQNEMTLKTLLQERMDELHGLMAQTGKQKNVNITYGRLSGNVLFPGEINQ.

The segment at 1-50 (MNDSSLSLKKWHALSALSNTMLSLAQSGKWDELIEQEVAYVSLVEKISIT) is required for homodimerization. The interval 59–97 (IQDQAMVMLNNVLQNEMTLKTLLQERMDELHGLMAQTGK) is fliD binding.

Belongs to the FliT family. In terms of assembly, homodimer. Interacts with FliD and FlhC.

It is found in the cytoplasm. The protein resides in the cytosol. Dual-function protein that regulates the transcription of class 2 flagellar operons and that also acts as an export chaperone for the filament-capping protein FliD. As a transcriptional regulator, acts as an anti-FlhDC factor; it directly binds FlhC, thus inhibiting the binding of the FlhC/FlhD complex to class 2 promoters, resulting in decreased expression of class 2 flagellar operons. As a chaperone, effects FliD transition to the membrane by preventing its premature polymerization, and by directing it to the export apparatus. This chain is Flagellar protein FliT, found in Enterobacter sp. (strain 638).